The chain runs to 247 residues: Carboxy-S-adenosyl-L-methionine synthase (247 aa).

S-adenosyl-L-methionine is bound by residues Tyr-40, 65-67 (GCS), 90-91 (DN), 122-123 (DI), Asn-137, and Arg-204.

This sequence belongs to the class I-like SAM-binding methyltransferase superfamily. Cx-SAM synthase family. In terms of assembly, homodimer.

It catalyses the reaction prephenate + S-adenosyl-L-methionine = carboxy-S-adenosyl-L-methionine + 3-phenylpyruvate + H2O. Functionally, catalyzes the conversion of S-adenosyl-L-methionine (SAM) to carboxy-S-adenosyl-L-methionine (Cx-SAM). In Pseudomonas syringae pv. tomato (strain ATCC BAA-871 / DC3000), this protein is Carboxy-S-adenosyl-L-methionine synthase.